A 300-amino-acid chain; its full sequence is MLEKGEHIEYPNTPPLHSPPESHTFSSQTDDSYFHKPSSTGLFATLVADTNSSVPSASRSPESIASSQSNDSAAIPSYRRKRRKVRKPEIVKPTLRKRGRKPKNISTLEHDKSKPVISSLIDEDANLSQIKARKSVLESRFSRLEEAFRDFYIKNLEKTEDLIRTDSHFVLNKELLSFRNDYEHRRKHYEKYSQCLNKQLDHFFSYKVTTVHKSYQRFATLLRRHLLDKTAKRYHDLCEKRPYKYITTDLLSPSLTCFASDILQTVPEYTSSQSSPVLLPATPSIVTNKQMMDDLTLCNV.

Disordered regions lie at residues 1–38 (MLEKGEHIEYPNTPPLHSPPESHTFSSQTDDSYFHKPS) and 50–109 (TNSS…STLE). Residues 21–38 (ESHTFSSQTDDSYFHKPS) are compositionally biased toward polar residues. A compositionally biased stretch (low complexity) spans 52–69 (SSVPSASRSPESIASSQS). The segment covering 94–103 (TLRKRGRKPK) has biased composition (basic residues).

The protein localises to the nucleus. In terms of biological role, has a role in meiosis. This is Meiotically up-regulated gene 165 protein (mug165) from Schizosaccharomyces pombe (strain 972 / ATCC 24843) (Fission yeast).